The following is a 120-amino-acid chain: MALNIEEIIASVKEASVLELNDLVKAIEEEFGVTAAAPVAVAAAGGGAAEQTEFTVELASAGDSKIKVIKVVREITGLGLKEAKELVDNAPKALKEGVAKDEAEEIKAKLEEVGANVEVK.

Belongs to the bacterial ribosomal protein bL12 family. In terms of assembly, homodimer. Part of the ribosomal stalk of the 50S ribosomal subunit. Forms a multimeric L10(L12)X complex, where L10 forms an elongated spine to which 2 to 4 L12 dimers bind in a sequential fashion. Binds GTP-bound translation factors.

Functionally, forms part of the ribosomal stalk which helps the ribosome interact with GTP-bound translation factors. Is thus essential for accurate translation. In Listeria innocua serovar 6a (strain ATCC BAA-680 / CLIP 11262), this protein is Large ribosomal subunit protein bL12.